A 31-amino-acid polypeptide reads, in one-letter code: Bacteriocin leucocin-B (31 aa).

It localises to the secreted. In terms of biological role, inhibits a wide spectrum of lactic acid bacteria. The polypeptide is Bacteriocin leucocin-B (Leuconostoc mesenteroides).